We begin with the raw amino-acid sequence, 388 residues long: Acyl-[acyl-carrier-protein] dehydrogenase MbtN (388 aa).

This sequence belongs to the acyl-CoA dehydrogenase family. The cofactor is FAD.

Its pathway is siderophore biosynthesis; mycobactin biosynthesis. Functionally, catalyzes the dehydrogenation at the alpha-beta position of ACP-bound acyl chains. This results in the introduction of a double bond in the lipidic chain, which is further transferred to the epsilon-amino group of lysine residue in the mycobactin core by MbtK. This chain is Acyl-[acyl-carrier-protein] dehydrogenase MbtN (mbtN), found in Mycolicibacterium paratuberculosis (strain ATCC BAA-968 / K-10) (Mycobacterium paratuberculosis).